A 763-amino-acid chain; its full sequence is Amyloid beta precursor like protein 2 (763 aa).

An N-terminal signal peptide occupies residues 1–31; the sequence is MAATGTAAAAATGRLLLLLLVGLTAPALALA. Topologically, residues 32–692 are extracellular; that stretch reads GYIEALAANA…PLREDFSLSS (661 aa). The tract at residues 46–139 is GFLD subdomain; the sequence is AVAEPQIAMF…PFKCLVGEFV (94 aa). The E1 domain occupies 46–205; it reads AVAEPQIAMF…HGTEYVCCPQ (160 aa). Intrachain disulfides connect Cys-56–Cys-80, Cys-91–Cys-133, Cys-116–Cys-123, Cys-149–Cys-203, Cys-160–Cys-190, and Cys-174–Cys-202. The cuBD subdomain stretch occupies residues 147 to 205; it reads EKCQFFHKERMEVCENHQHWHTVVKEACLTQGMTLYSYGMLLPCGVDQFHGTEYVCCPQ. Cu cation is bound by residues His-163, His-167, and Tyr-184. A disordered region spans residues 211-299; the sequence is SVSKEEEEED…EPGSDGTMSD (89 aa). Composition is skewed to acidic residues over residues 215 to 233 and 242 to 269; these read EEEEEDEEEEEEEDEEEDY and TEADLEDFTEAAVDEDDEDEEEGEEVVE. Positions 270–282 are enriched in basic and acidic residues; the sequence is DRDYYYDTFKGDD. Residues 306 to 364 enclose the BPTI/Kunitz inhibitor domain; the sequence is VKAVCSQEAMTGPCRAVMPRWYFDLSKGKCVRFIYGGCGGNRNNFESEDYCMAVCKAMI. Disulfide bonds link Cys-310–Cys-360, Cys-319–Cys-343, and Cys-335–Cys-356. The E2 domain maps to 373 to 564; sequence DVDVYFETSA…QEIQEEIDEL (192 aa). Ser-590 is subject to Phosphoserine; by FAM20C. An O-linked (Xyl...) (chondroitin sulfate) serine glycan is attached at Ser-626. Residues 693–716 traverse the membrane as a helical segment; that stretch reads SALIGLLVIAVAIATVIVISLVML. At 717–763 the chain is on the cytoplasmic side; it reads RKRQYGTISHGIVEVDPMLTPEERHLNKMQNHGYENPTYKYLEQMQI. The interval 749–763 is interaction with DAB2; the sequence is GYENPTYKYLEQMQI. Residues 750–755 carry the NPXY motif motif; it reads YENPTY.

This sequence belongs to the APP family. As to quaternary structure, interacts with CPEB1. Interacts (via NPXY motif) with DAB2 (via PID domain); the interaction is impaired by tyrosine phosphorylation of the NPXY motif. Interacts (via cytoplasmic domain) with APBB2/FE65L. Interacts (via intracellular domain) with APBB3/FE65L2. In terms of processing, the BPTI/Kunitz inhibitor domain is O-glycosylated. Expressed in placenta, brain, heart, lung, liver, kidney and endothelial tissues.

The protein resides in the cell membrane. It localises to the nucleus. Functionally, may play a role in the regulation of hemostasis. The soluble form may have inhibitory properties towards coagulation factors. May interact with cellular G-protein signaling pathways. May bind to the DNA 5'-GTCACATG-3'(CDEI box). Inhibits trypsin, chymotrypsin, plasmin, factor XIA and plasma and glandular kallikrein. Modulates the Cu/Zn nitric oxide-catalyzed autodegradation of GPC1 heparan sulfate side chains in fibroblasts. The sequence is that of Amyloid beta precursor like protein 2 from Homo sapiens (Human).